Here is a 984-residue protein sequence, read N- to C-terminus: Ephrin type-A receptor 3 (984 aa).

The first 20 residues, Met1–Arg20, serve as a signal peptide directing secretion. At Glu21 to His541 the chain is on the extracellular side. The region spanning Glu29–Lys207 is the Eph LBD domain. 5 N-linked (GlcNAc...) asparagine glycosylation sites follow: Asn232, Asn337, Asn391, Asn404, and Asn493. Fibronectin type-III domains are found at residues Pro325–Ala435 and Ala436–Ser532. Residues Val542–Gly565 form a helical membrane-spanning segment. Residues Arg566–Val984 lie on the Cytoplasmic side of the membrane. Residues Tyr597 and Tyr603 each carry the phosphotyrosine; by autocatalysis modification. The region spanning Ile622–Ile883 is the Protein kinase domain. Residues Gly629–Gly634, Lys654, and Glu701–Ser707 each bind ATP. Phosphotyrosine; by autocatalysis is present on Tyr702. The active-site Proton acceptor is Asp747. Residue Arg751 to Asn752 coordinates ATP. At Tyr780 the chain carries Phosphotyrosine; by autocatalysis. The SAM domain occupies Ala912 to Gln976. Residue Tyr938 is modified to Phosphotyrosine. The PDZ-binding signature appears at Val982–Val984.

The protein belongs to the protein kinase superfamily. Tyr protein kinase family. Ephrin receptor subfamily. Heterotetramer upon binding of the ligand. The heterotetramer is composed of an ephrin dimer and a receptor dimer. Oligomerization is probably required to induce biological responses. Forms a ternary EFNA5-EPHA3-ADAM10 complex mediating EFNA5 extracellular domain shedding by ADAM10 which regulates the EFNA5-EPHA3 complex internalization and function. Interacts (phosphorylated) with PTPN1; dephosphorylates EPHA3 and may regulate its trafficking and function. Interacts (phosphorylated) with CRK; mediates EFNA5-EPHA3 signaling through RHOA GTPase activation. Interacts with NCK1 (via SH2 domain); mediates EFNA5-EPHA3 signaling. Autophosphorylates upon activation by EFNA5. Phosphorylation on Tyr-603 mediates interaction with NCK1. Dephosphorylated by PTPN1. As to expression, most abundant in the heart, brain and lung.

Its subcellular location is the cell membrane. It catalyses the reaction L-tyrosyl-[protein] + ATP = O-phospho-L-tyrosyl-[protein] + ADP + H(+). Receptor tyrosine kinase which binds promiscuously membrane-bound ephrin family ligands residing on adjacent cells, leading to contact-dependent bidirectional signaling into neighboring cells. The signaling pathway downstream of the receptor is referred to as forward signaling while the signaling pathway downstream of the ephrin ligand is referred to as reverse signaling. Highly promiscuous for ephrin-A ligands it binds preferentially EFNA5. Upon activation by EFNA5 regulates cell-cell adhesion, cytoskeletal organization and cell migration. Plays a role in cardiac cells migration and differentiation and regulates the formation of the atrioventricular canal and septum during development probably through activation by EFNA1. Involved in the retinotectal mapping of neurons. May also control the segregation but not the guidance of motor and sensory axons during neuromuscular circuit development. In Rattus norvegicus (Rat), this protein is Ephrin type-A receptor 3 (Epha3).